We begin with the raw amino-acid sequence, 516 residues long: MKKRIAIIGAGLSGIAAIKQLTDEGHHVVCYEKAESFGGVFAAKKIYEDLHLTISNYFMAYSDFLPTEQSLKFWSKQEYVQYLKRYLAHFDIEKHIVYNHKVVNAEQNGDKWTVKVQSGSGEETESEFDMVVVCSGHFQEPKTPDLEGLSDFMGDIIHSNDYRDKMAFKGKRVMCVGLGESSADITSEISEVAEKCILSLRRYPAVAPRYMAFQEDPYFTIDTSWLTSRIVNKLPFSYHRGITKNIFHKYVNSRNLHLRIRGEWLHKSGPSIHQAVTKNERLFKPIAEGKVLPNIGGIERFEGNTVIFKDGTHEEIDAIVFCTGYKLSFPFLQHKIECMRDLYKQIFIPSVGSSLAFVGFVRPQQGGIPVIAEMQSRYLAQLASGVKSLPSLEKQKEVIMEDANHWETEYHITPHVASLVNYCHYMDSMARLVGCMPKTPSLLKDPLLRVKLLHNPQFAAQYRLEGPHPMSESSRDFLVNFPNISTWPRIIHFECALAMQKLLSFLSMDNLRELKK.

FAD contacts are provided by Ser-13, Glu-32, Val-40, Phe-41, His-51, Val-102, and Gln-365.

Belongs to the FMO family. Requires FAD as cofactor.

It carries out the reaction 2 bromide + 4-hydroxybenzoate + 2 NADPH + 2 O2 + 5 H(+) = 2,4-dibromophenol + CO2 + 2 NADP(+) + 4 H2O. The catalysed reaction is bromide + 4-hydroxybenzoate + NADPH + O2 + 2 H(+) = 3-bromo-4-hydroxybenzoate + NADP(+) + 2 H2O. It catalyses the reaction 3-bromo-4-hydroxybenzoate + bromide + NADPH + O2 + 3 H(+) = 2,4-dibromophenol + CO2 + NADP(+) + 2 H2O. The enzyme catalyses 3,4-dihydroxybenzoate + 2 bromide + 2 NADPH + 2 O2 + 5 H(+) = 3,5-dibromobenzene-1,2-diol + CO2 + 2 NADP(+) + 4 H2O. It carries out the reaction 3,4-dihydroxybenzoate + bromide + NADPH + O2 + 2 H(+) = 3-bromo-4,5-dihydroxybenzoate + NADP(+) + 2 H2O. The catalysed reaction is 3-bromo-4,5-dihydroxybenzoate + bromide + NADPH + O2 + 3 H(+) = 3,5-dibromobenzene-1,2-diol + CO2 + NADP(+) + 2 H2O. Brominase involved in the biosynthesis of polybrominated aromatic organic compounds. Catalyzes the bromination of 4-hydroxybenzoate (4-HBA) to 3-bromo-4-hydroxybenzoate, followed by bromination and decarboxylation of 3-bromo-4-hydroxybenzoate to 2,4-dibromophenol. Can also use 3,4-dihydroxybenzoate, with lower efficiency, forming 3-bromo-4,5-dihydroxybenzoate and 3,5-dibromobenzene-1,2-diol. In Marinomonas mediterranea (strain ATCC 700492 / JCM 21426 / NBRC 103028 / MMB-1), this protein is 4-hydroxybenzoate brominase (decarboxylating).